The chain runs to 48 residues: Large ribosomal subunit protein bL32 (48 aa).

Positions 24–48 (LPMPIKDKDGSYKMPHRVNPVTKEY) are disordered.

It belongs to the bacterial ribosomal protein bL32 family.

The protein is Large ribosomal subunit protein bL32 of Campylobacter lari (strain RM2100 / D67 / ATCC BAA-1060).